The sequence spans 423 residues: CinA-like protein (423 aa).

It belongs to the CinA family.

The protein is CinA-like protein of Chlorobium chlorochromatii (strain CaD3).